We begin with the raw amino-acid sequence, 487 residues long: Cobyric acid synthase (487 aa).

One can recognise a GATase cobBQ-type domain in the interval 248 to 435 (VLKVIVPVLP…LHGLFEGSQS (188 aa)). Cysteine 329 serves as the catalytic Nucleophile. Histidine 427 is a catalytic residue.

Belongs to the CobB/CobQ family. CobQ subfamily.

The protein operates within cofactor biosynthesis; adenosylcobalamin biosynthesis. In terms of biological role, catalyzes amidations at positions B, D, E, and G on adenosylcobyrinic A,C-diamide. NH(2) groups are provided by glutamine, and one molecule of ATP is hydrogenolyzed for each amidation. The chain is Cobyric acid synthase from Pseudomonas entomophila (strain L48).